The following is a 320-amino-acid chain: Acetyl-coenzyme A carboxylase carboxyl transferase subunit beta (320 aa).

The CoA carboxyltransferase N-terminal domain occupies 25-294 (LWRKCPECGT…AIVGDLPAPD (270 aa)). 4 residues coordinate Zn(2+): Cys-29, Cys-32, Cys-48, and Cys-51. A C4-type zinc finger spans residues 29 to 51 (CPECGTMLFHRELSDNLFVCISC). The tract at residues 290-320 (LPAPDPAPATPEPQKAAPSAPAQDKPGAGRS) is disordered.

It belongs to the AccD/PCCB family. As to quaternary structure, acetyl-CoA carboxylase is a heterohexamer composed of biotin carboxyl carrier protein (AccB), biotin carboxylase (AccC) and two subunits each of ACCase subunit alpha (AccA) and ACCase subunit beta (AccD). Zn(2+) is required as a cofactor.

The protein resides in the cytoplasm. The enzyme catalyses N(6)-carboxybiotinyl-L-lysyl-[protein] + acetyl-CoA = N(6)-biotinyl-L-lysyl-[protein] + malonyl-CoA. The protein operates within lipid metabolism; malonyl-CoA biosynthesis; malonyl-CoA from acetyl-CoA: step 1/1. Component of the acetyl coenzyme A carboxylase (ACC) complex. Biotin carboxylase (BC) catalyzes the carboxylation of biotin on its carrier protein (BCCP) and then the CO(2) group is transferred by the transcarboxylase to acetyl-CoA to form malonyl-CoA. This chain is Acetyl-coenzyme A carboxylase carboxyl transferase subunit beta, found in Dinoroseobacter shibae (strain DSM 16493 / NCIMB 14021 / DFL 12).